A 71-amino-acid polypeptide reads, in one-letter code: BBSome-interacting protein 1 (71 aa).

The protein belongs to the BBIP10 family.

The protein resides in the cell projection. It is found in the cilium. It localises to the cytoplasm. Required for primary cilia assembly. The chain is BBSome-interacting protein 1 (bbip1) from Nematostella vectensis (Starlet sea anemone).